The primary structure comprises 364 residues: Pyrimidine monooxygenase RutA (364 aa).

FMN-binding positions include 49-50, Asn-115, Glu-124, 140-141, and Ser-190; these read IK and RY.

The protein belongs to the NtaA/SnaA/DszA monooxygenase family. RutA subfamily.

It carries out the reaction uracil + FMNH2 + NADH + O2 = (Z)-3-ureidoacrylate + FMN + NAD(+) + H2O + H(+). It catalyses the reaction thymine + FMNH2 + NADH + O2 = (Z)-2-methylureidoacrylate + FMN + NAD(+) + H2O + H(+). Its function is as follows. Catalyzes the pyrimidine ring opening between N-3 and C-4 by an unusual flavin hydroperoxide-catalyzed mechanism, adding oxygen atoms in the process to yield ureidoacrylate peracid, that immediately reacts with FMN forming ureidoacrylate and FMN-N(5)-oxide. The FMN-N(5)-oxide reacts spontaneously with NADH to produce FMN. Requires the flavin reductase RutF to regenerate FMN in vivo. This chain is Pyrimidine monooxygenase RutA, found in Methylorubrum extorquens (strain ATCC 14718 / DSM 1338 / JCM 2805 / NCIMB 9133 / AM1) (Methylobacterium extorquens).